The primary structure comprises 151 residues: Ribosomal RNA large subunit methyltransferase H (151 aa).

S-adenosyl-L-methionine contacts are provided by residues Ala101 and 119–124 (LSEMTF).

The protein belongs to the RNA methyltransferase RlmH family. Homodimer.

The protein localises to the cytoplasm. It carries out the reaction pseudouridine(1915) in 23S rRNA + S-adenosyl-L-methionine = N(3)-methylpseudouridine(1915) in 23S rRNA + S-adenosyl-L-homocysteine + H(+). In terms of biological role, specifically methylates the pseudouridine at position 1915 (m3Psi1915) in 23S rRNA. The polypeptide is Ribosomal RNA large subunit methyltransferase H (Helicobacter pylori (strain G27)).